Consider the following 89-residue polypeptide: SAP domain-containing new25 (89 aa).

Positions 44–78 (PSQWSKKQLIEYCKKNSLKTSGSHEELVIRVQNHL) constitute an SAP domain.

The polypeptide is SAP domain-containing new25 (new25) (Schizosaccharomyces pombe (strain 972 / ATCC 24843) (Fission yeast)).